The following is a 56-amino-acid chain: Large ribosomal subunit protein bL33A (56 aa).

This sequence belongs to the bacterial ribosomal protein bL33 family.

In Nocardia farcinica (strain IFM 10152), this protein is Large ribosomal subunit protein bL33A.